The sequence spans 387 residues: Carboxynorspermidine/carboxyspermidine decarboxylase (387 aa).

Residue Lys51 is modified to N6-(pyridoxal phosphate)lysine. Residues Glu248 and Asp284 each coordinate substrate.

The protein belongs to the Orn/Lys/Arg decarboxylase class-II family. NspC subfamily. As to quaternary structure, homodimer. Pyridoxal 5'-phosphate serves as cofactor.

The protein resides in the cytoplasm. It carries out the reaction carboxynorspermidine + H(+) = norspermidine + CO2. It catalyses the reaction carboxyspermidine + H(+) = spermidine + CO2. Functionally, catalyzes the decarboxylation of carboxynorspermidine and carboxyspermidine. Essential for biofilm formation. The chain is Carboxynorspermidine/carboxyspermidine decarboxylase from Vibrio cholerae serotype O1 (strain ATCC 39315 / El Tor Inaba N16961).